Reading from the N-terminus, the 708-residue chain is Protein psiF (708 aa).

The N-terminal stretch at 1–19 (MKYLFIAIILILYCSFTKA) is a signal peptide. The Extracellular portion of the chain corresponds to 20-643 (DQKKFLVNMY…QSTAVKVGVG (624 aa)). N-linked (GlcNAc...) asparagine glycosylation is found at N78, N116, N222, N317, N318, N371, N498, and N600. One can recognise a PA14 domain in the interval 103 to 263 (TQTAGSQNYY…YDYCGICNGK (161 aa)). The chain crosses the membrane as a helical span at residues 644–664 (IGAAAAAGIAIGGAVAAGLAI). The Cytoplasmic segment spans residues 665-708 (FGGKKAYDTWKTSRGNVMTGSQSNPLYTQNQNNGNNPLYSAPAE). Over residues 682–702 (MTGSQSNPLYTQNQNNGNNPL) the composition is skewed to polar residues. Residues 682–708 (MTGSQSNPLYTQNQNNGNNPLYSAPAE) are disordered.

The protein belongs to the prespore-cell-inducing factor family. As to quaternary structure, forms a complex with dicB.

Its subcellular location is the membrane. The protein localises to the secreted. Functionally, acts as a quorum sensing protein regulating discoidin gene expression during growth and development. D.discoideum is a single-celled amoebae and switches to multicellular development when food becomes limited. As the growing cells reach a high density, they begin expressing discoidin genes. The ability of psiF/dicA to induce discoidin gene expression when present in conditioned medium, suggests that it allows cells to sense their local density. This chain is Protein psiF (psiF), found in Dictyostelium discoideum (Social amoeba).